The primary structure comprises 194 residues: A-type ATP synthase subunit E (194 aa).

A disordered region spans residues 35-56; that stretch reads DAEADADQIREEREAEVERTIE. Positions 41-56 are enriched in basic and acidic residues; the sequence is DQIREEREAEVERTIE.

This sequence belongs to the V-ATPase E subunit family. Has multiple subunits with at least A(3), B(3), C, D, E, F, H, I and proteolipid K(x).

The protein resides in the cell membrane. Component of the A-type ATP synthase that produces ATP from ADP in the presence of a proton gradient across the membrane. This Haloarcula marismortui (strain ATCC 43049 / DSM 3752 / JCM 8966 / VKM B-1809) (Halobacterium marismortui) protein is A-type ATP synthase subunit E.